Reading from the N-terminus, the 186-residue chain is Dirigent protein 4 (186 aa).

Residues 1–20 (MGKNLGLVVSFYLCITFALG) form the signal peptide. Residues asparagine 67, asparagine 126, asparagine 169, and asparagine 180 are each glycosylated (N-linked (GlcNAc...) asparagine).

It belongs to the plant dirigent protein family. In terms of assembly, homodimer.

Its subcellular location is the secreted. It localises to the extracellular space. It is found in the apoplast. In terms of biological role, dirigent proteins impart stereoselectivity on the phenoxy radical-coupling reaction, yielding optically active lignans from two molecules of coniferyl alcohol in the biosynthesis of lignans, flavonolignans, and alkaloids and thus plays a central role in plant secondary metabolism. The polypeptide is Dirigent protein 4 (DIR4) (Arabidopsis thaliana (Mouse-ear cress)).